Consider the following 606-residue polypeptide: 4-hydroxy-3-methylbut-2-en-1-yl diphosphate synthase (flavodoxin) (606 aa).

Cys513, Cys516, Cys547, and Glu554 together coordinate [4Fe-4S] cluster.

The protein belongs to the IspG family. [4Fe-4S] cluster is required as a cofactor.

It carries out the reaction (2E)-4-hydroxy-3-methylbut-2-enyl diphosphate + oxidized [flavodoxin] + H2O + 2 H(+) = 2-C-methyl-D-erythritol 2,4-cyclic diphosphate + reduced [flavodoxin]. It functions in the pathway isoprenoid biosynthesis; isopentenyl diphosphate biosynthesis via DXP pathway; isopentenyl diphosphate from 1-deoxy-D-xylulose 5-phosphate: step 5/6. In terms of biological role, converts 2C-methyl-D-erythritol 2,4-cyclodiphosphate (ME-2,4cPP) into 1-hydroxy-2-methyl-2-(E)-butenyl 4-diphosphate. This is 4-hydroxy-3-methylbut-2-en-1-yl diphosphate synthase (flavodoxin) from Chlamydia caviae (strain ATCC VR-813 / DSM 19441 / 03DC25 / GPIC) (Chlamydophila caviae).